A 205-amino-acid chain; its full sequence is Guanylate kinase (205 aa).

Positions 19-197 (PKLFTISAPA…AYRVLKSIFI (179 aa)) constitute a Guanylate kinase-like domain. 26–33 (APAGVGKT) serves as a coordination point for ATP.

It belongs to the guanylate kinase family.

The protein localises to the cytoplasm. It catalyses the reaction GMP + ATP = GDP + ADP. Its function is as follows. Essential for recycling GMP and indirectly, cGMP. This is Guanylate kinase (gmk) from Chlamydia pneumoniae (Chlamydophila pneumoniae).